The chain runs to 199 residues: Inducible T-cell costimulator (199 aa).

The N-terminal stretch at 1–20 is a signal peptide; it reads MKSGLWYFFLFCLRIKVLTG. At 21–140 the chain is on the extracellular side; that stretch reads EINGSANYEM…YESQLCCQLK (120 aa). An Ig-like V-type domain is found at 30-132; the sequence is MFIFHNGGVQ…LTGGYLHIYE (103 aa). 2 cysteine pairs are disulfide-bonded: Cys42–Cys109 and Cys63–Cys83. 2 N-linked (GlcNAc...) asparagine glycosylation sites follow: Asn89 and Asn110. The helical transmembrane segment at 141–161 threads the bilayer; it reads FWLPIGCAAFVVVCILGCILI. Residues 162–199 lie on the Cytoplasmic side of the membrane; it reads CWLTKKKYSSSVHDPNGEYMFMRAVNTAKKSRLTDVTL.

Homodimer; disulfide-linked. Interacts with ICOSLG. Interacts with PIK3R1. Interacts with TBK1; this interaction is critical for the maturation of T follicular regulatory cells. N-glycosylated. Activated T-cells. Highly expressed on tonsillar T-cells, which are closely associated with B-cells in the apical light zone of germinal centers, the site of terminal B-cell maturation. Expressed at lower levels in thymus, lung, lymph node and peripheral blood leukocytes. Expressed in the medulla of fetal and newborn thymus.

The protein localises to the cell membrane. Its subcellular location is the secreted. Its function is as follows. Stimulatory receptor expressed in activated or antigen-experienced T-cells that plays an important role in the immune response. Upon binding to its ligand ICOSL expressed on antigen presenting cells (APCs), delivers costimulatory signals that enhances all basic T-cell responses to a foreign antigen, namely proliferation, secretion of lymphokines including IL10, up-regulation of molecules that mediate cell-cell interaction, and effective help for antibody secretion by B-cells. Also acts as a costimulatory receptor critical for the differentiation of T follicular regulatory cells upon immune challenges such as viral infection. Mechanistically, potentiates TCR-induced calcium flux by augmenting PLCG1 activation and actin remodeling. In addition, activates PI3K signaling pathways independently of calcium flux. Essential both for efficient interaction between T and B-cells and for normal antibody responses to T-cell dependent antigens. Prevents the apoptosis of pre-activated T-cells. Plays a critical role in CD40-mediated class switching of immunoglobin isotypes. This is Inducible T-cell costimulator (ICOS) from Homo sapiens (Human).